The sequence spans 307 residues: tRNA dimethylallyltransferase (307 aa).

5 to 12 (GPTGTGKS) is an ATP binding site. Position 7–12 (7–12 (TGTGKS)) interacts with substrate.

Belongs to the IPP transferase family. Monomer. The cofactor is Mg(2+).

It catalyses the reaction adenosine(37) in tRNA + dimethylallyl diphosphate = N(6)-dimethylallyladenosine(37) in tRNA + diphosphate. Its function is as follows. Catalyzes the transfer of a dimethylallyl group onto the adenine at position 37 in tRNAs that read codons beginning with uridine, leading to the formation of N6-(dimethylallyl)adenosine (i(6)A). In Mycobacterium avium (strain 104), this protein is tRNA dimethylallyltransferase.